Consider the following 1317-residue polypeptide: WASH complex subunit 2 (1317 aa).

Positions 1–219 are sufficient for interaction with WASHC3, WASHC4 and WASHC5; required for interaction with WASHC1; it reads MNRTSPDSER…VGSDRGSIVD (219 aa). 5 positions are modified to phosphoserine: S157, S159, S204, S205, and S209. Over residues 201 to 213 the composition is skewed to low complexity; the sequence is GELSSEEGSVGSD. Positions 201-630 are disordered; it reads GELSSEEGSV…RKSKGELWDS (430 aa). 2 stretches are compositionally biased toward acidic residues: residues 219–232 and 250–274; these read DSEE…SDED and DEEE…EDIE. S284 is subject to Phosphoserine. Composition is skewed to basic and acidic residues over residues 289-325 and 366-376; these read LAAR…RTPP and DLFRETSRDRP. At T323 the chain carries Phosphothreonine. The segment at 348–582 is sufficient for interaction with CCDC93; that stretch reads SRGGLFSGQG…QVSSQQPQSQ (235 aa). The tract at residues 349–1317 is interaction with VPS35; sequence RGGLFSGQGL…DDPLNAFGSQ (969 aa). Residues 358–368 carry the LFa 1 motif; the sequence is LFDDEDESDLF. Low complexity predominate over residues 379–399; sequence APVSEESSSPKPGKKIPAGAV. A phosphoserine mark is found at S385 and S387. 2 short sequence motifs (LFa) span residues 433-445 and 464-473; these read LFDD…DNFF and IFDDEEGDLF. The segment covering 500 to 518 has biased composition (polar residues); that stretch reads TLPSSKNPKLVSETKTQKG. 2 short sequence motifs (LFa) span residues 519–530 and 554–565; these read LFSDEEDSEDLF and LFGDEDEEDNLF. S521 and S526 each carry phosphoserine. The segment covering 529-548 has biased composition (low complexity); that stretch reads LFSSQNSSKSKSASLLSSQL. The segment covering 569 to 582 has biased composition (low complexity); it reads PAKKQVSSQQPQSQ. Over residues 583-592 the composition is skewed to basic and acidic residues; it reads EKPKPSEQPK. Positions 599–611 match the LFa 6 motif; it reads LFSSDEEDQWNIT. 2 positions are modified to phosphoserine: S601 and S602. The span at 613–627 shows a compositional bias: basic and acidic residues; sequence SHTKLATDRKSKGEL. Short sequence motifs (LFa) lie at residues 646-657 and 673-685; these read LFEEDDDEADLF and LFED…SSLF. The interval 667 to 817 is disordered; it reads TQRTSLLFED…GRPKSTGVFQ (151 aa). A Phosphoserine modification is found at S710. The segment covering 717-744 has biased composition (basic and acidic residues); sequence VPSRVKSVDVKVGNGKEADVAKVTEKEG. 2 positions are modified to phosphoserine: S763 and S778. Residues 788–810 are compositionally biased toward basic and acidic residues; the sequence is EDQSNTHVSKNDAEKGLKTDGRP. 2 short sequence motifs (LFa) span residues 815 to 823 and 832 to 838; these read VFQDEELLF and DPDVDLF. Residue S853 is modified to Phosphoserine. An LFa 11 motif is present at residues 854–864; sequence LFGDDEDYDLF. 2 disordered regions span residues 867 to 926 and 960 to 1079; these read AKTQ…REPS and ELAF…AAPP. Over residues 874–906 the composition is skewed to basic and acidic residues; sequence PEKKGALKKDRPVSLKNEEAPESTEGSKEKSLW. An interaction with phospholipids region spans residues 912 to 1317; the sequence is QDSSGLTPFK…DDPLNAFGSQ (406 aa). Residues 1003–1021 show a composition bias toward basic residues; it reads NKSRVKVRGKRRPQTRAAR. The segment at 1004–1022 is required for interaction with F-actin-capping protein subunit alpha (CAPZA1 or CAPZA2 or CAPZA3); the sequence is KSRVKVRGKRRPQTRAARR. Residues S1029, S1047, S1064, and S1092 each carry the phosphoserine modification. An LFa 12 motif is present at residues 1107-1114; that stretch reads LFDSGDIF. The interval 1119–1141 is disordered; it reads GSQSMEGTKVKAAETPAHLSGGS. Short sequence motifs (LFa) lie at residues 1147-1161, 1177-1185, 1210-1216, 1238-1246, 1266-1275, and 1306-1314; these read VFPA…DDLF, LLEDEDDLF, IFEDDIF, LFDDNIDIF, VFDDDTDDIF, and IFDDPLNAF. Phosphoserine is present on residues S1152, S1155, and S1156. Residues 1158-1183 are disordered; that stretch reads DDLFQTVKPRPAKKRNPFPLLEDEDD. A disordered region spans residues 1277-1317; that stretch reads SGLQAKKSKPKSQSAEATSELRSDHKVSNIFDDPLNAFGSQ. The residue at position 1316 (S1316) is a Phosphoserine.

This sequence belongs to the FAM21 family. As to quaternary structure, component of the WASH core complex also described as WASH regulatory complex SHRC composed of WASHC1, WASHC2, WASHC3, WASHC4 and WASHC5; in the complex interacts (via N-terminus) directly with WASHC1. The WASH core complex associates via WASHC2 with the F-actin-capping protein dimer (formed by CAPZA1, CAPZA2 or CAPZA3 and CAPZB) in a transient or substoichiometric manner which was initially described as WASH complex. Interacts with VPS35; mediates the association with the retromer CSC complex. Interacts with FKBP15. Interacts with CCDC93, CCDC22, C16orf62 homolog; indicative for an association of the WASH core complex with the CCC complex. Directly interacts with TBC1D23.

It is found in the early endosome membrane. The protein localises to the cell membrane. In terms of biological role, acts as a component of the WASH core complex that functions as a nucleation-promoting factor (NPF) at the surface of endosomes, where it recruits and activates the Arp2/3 complex to induce actin polymerization, playing a key role in the fission of tubules that serve as transport intermediates during endosome sorting. Mediates the recruitment of the WASH core complex to endosome membranes via binding to phospholipids and VPS35 of the retromer CSC. Mediates the recruitment of the F-actin-capping protein dimer to the WASH core complex probably promoting localized F-actin polymerization needed for vesicle scission. Via its C-terminus binds various phospholipids, most strongly phosphatidylinositol 4-phosphate (PtdIns-(4)P), phosphatidylinositol 5-phosphate (PtdIns-(5)P) and phosphatidylinositol 3,5-bisphosphate (PtdIns-(3,5)P2). Involved in the endosome-to-plasma membrane trafficking and recycling of SNX27-retromer-dependent cargo proteins, such as GLUT1. Required for the association of DNAJC13, ENTR1, ANKRD50 with retromer CSC subunit VPS35. Required for the endosomal recruitment of CCC complex subunits COMMD1, CCDC93 and C16orf62 homolog. The chain is WASH complex subunit 2 from Cricetulus griseus (Chinese hamster).